Here is a 462-residue protein sequence, read N- to C-terminus: cAMP-dependent protein kinase regulatory subunit (462 aa).

A dimerization and phosphorylation region spans residues 54–203 (TPSPRFPPSP…RLKYAIEGNF (150 aa)). The segment at 79–157 (FGANANPFGG…PTTDSYPAQY (79 aa)) is disordered. Residues 80-102 (GANANPFGGSSSNPNPFGGSASP) show a composition bias toward low complexity. Serine 164 carries the phosphoserine modification. 3',5'-cyclic AMP is bound by residues 204 to 333 (LFSH…FLEE), glutamate 282, arginine 291, 336 to 453 (ILSS…KTGV), glutamate 401, and arginine 410.

The protein belongs to the cAMP-dependent kinase regulatory chain family. In terms of assembly, tetramer, composed of 2 regulatory (R) and 2 catalytic (C) subunits. In the presence of cAMP it dissociates into 2 active monomeric C subunits and an R dimer.

The chain is cAMP-dependent protein kinase regulatory subunit (pkar1) from Hypocrea atroviridis (Trichoderma atroviride).